The following is a 357-amino-acid chain: 4-hydroxy-3-methylbut-2-en-1-yl diphosphate synthase (flavodoxin) (357 aa).

Residues C264, C267, C299, and E306 each coordinate [4Fe-4S] cluster.

It belongs to the IspG family. It depends on [4Fe-4S] cluster as a cofactor.

The catalysed reaction is (2E)-4-hydroxy-3-methylbut-2-enyl diphosphate + oxidized [flavodoxin] + H2O + 2 H(+) = 2-C-methyl-D-erythritol 2,4-cyclic diphosphate + reduced [flavodoxin]. It functions in the pathway isoprenoid biosynthesis; isopentenyl diphosphate biosynthesis via DXP pathway; isopentenyl diphosphate from 1-deoxy-D-xylulose 5-phosphate: step 5/6. Converts 2C-methyl-D-erythritol 2,4-cyclodiphosphate (ME-2,4cPP) into 1-hydroxy-2-methyl-2-(E)-butenyl 4-diphosphate. This is 4-hydroxy-3-methylbut-2-en-1-yl diphosphate synthase (flavodoxin) from Campylobacter jejuni (strain RM1221).